We begin with the raw amino-acid sequence, 332 residues long: Ketol-acid reductoisomerase (NADP(+)) (332 aa).

Positions A4–T184 constitute a KARI N-terminal Rossmann domain. Residues Y27–Q30, S53, S55, and D85–Q88 contribute to the NADP(+) site. H110 is a catalytic residue. G136 is a binding site for NADP(+). The region spanning T185–L330 is the KARI C-terminal knotted domain. Mg(2+)-binding residues include D193, E197, E229, and E233. S254 contributes to the substrate binding site.

Belongs to the ketol-acid reductoisomerase family. Requires Mg(2+) as cofactor.

It catalyses the reaction (2R)-2,3-dihydroxy-3-methylbutanoate + NADP(+) = (2S)-2-acetolactate + NADPH + H(+). The catalysed reaction is (2R,3R)-2,3-dihydroxy-3-methylpentanoate + NADP(+) = (S)-2-ethyl-2-hydroxy-3-oxobutanoate + NADPH + H(+). The protein operates within amino-acid biosynthesis; L-isoleucine biosynthesis; L-isoleucine from 2-oxobutanoate: step 2/4. Its pathway is amino-acid biosynthesis; L-valine biosynthesis; L-valine from pyruvate: step 2/4. Functionally, involved in the biosynthesis of branched-chain amino acids (BCAA). Catalyzes an alkyl-migration followed by a ketol-acid reduction of (S)-2-acetolactate (S2AL) to yield (R)-2,3-dihydroxy-isovalerate. In the isomerase reaction, S2AL is rearranged via a Mg-dependent methyl migration to produce 3-hydroxy-3-methyl-2-ketobutyrate (HMKB). In the reductase reaction, this 2-ketoacid undergoes a metal-dependent reduction by NADPH to yield (R)-2,3-dihydroxy-isovalerate. The sequence is that of Ketol-acid reductoisomerase (NADP(+)) from Gloeobacter violaceus (strain ATCC 29082 / PCC 7421).